Reading from the N-terminus, the 114-residue chain is Large ribosomal subunit protein bL19 (114 aa).

Belongs to the bacterial ribosomal protein bL19 family.

Its function is as follows. This protein is located at the 30S-50S ribosomal subunit interface and may play a role in the structure and function of the aminoacyl-tRNA binding site. This chain is Large ribosomal subunit protein bL19, found in Halalkalibacterium halodurans (strain ATCC BAA-125 / DSM 18197 / FERM 7344 / JCM 9153 / C-125) (Bacillus halodurans).